Reading from the N-terminus, the 330-residue chain is Mas-related G-protein coupled receptor member B8 (330 aa).

The Extracellular portion of the chain corresponds to 1–33 (MDSSFPDWNIEFREQNESYFMESSSCDMSLAMS). An N-linked (GlcNAc...) asparagine glycan is attached at Asn16. Residues 34-54 (LLSIIIAIIGLTGNVIVLQLL) form a helical membrane-spanning segment. Over 55–62 (GFHMHRNA) the chain is Cytoplasmic. A helical transmembrane segment spans residues 63–83 (FSVYIFNLSGANFLFLCTHIV). The Extracellular segment spans residues 84–101 (FSLENLIRQFHYIDIHMA). Residues 102–122 (LFSVNVTILAYLAGVSMITAI) traverse the membrane as a helical segment. Residues 123–146 (SVEYWLSVLWPTWYHAQRPKHTST) are Cytoplasmic-facing. A helical membrane pass occupies residues 147 to 167 (VICTLLWVFSLLLTLWNWIIC). The Extracellular segment spans residues 168–177 (KVLDYIYNWD). The helical transmembrane segment at 178–198 (MCWKLALIIVVWLLVLFVVLS) threads the bilayer. Over 199-219 (RSNQALLFRVFCGSQQTPVTR) the chain is Cytoplasmic. The chain crosses the membrane as a helical span at residues 220-240 (LLVTIMLTALVVLICGFGIGI). Residues 241 to 260 (CFFYWKKEENSIMPCGYFYE) lie on the Extracellular side of the membrane. A helical membrane pass occupies residues 261 to 281 (TILLLSGVNSCANPIICLFVG). Residues 282–330 (SIKHCQFQCGTLRLILQRAIQESPEEEDEEVEEVVEQEGGEEDEESTTL) are Cytoplasmic-facing. The disordered stretch occupies residues 302 to 330 (QESPEEEDEEVEEVVEQEGGEEDEESTTL). A compositionally biased stretch (acidic residues) spans 304–330 (SPEEEDEEVEEVVEQEGGEEDEESTTL).

The protein belongs to the G-protein coupled receptor 1 family. Mas subfamily.

The protein localises to the membrane. Orphan receptor. Probably involved in the function of nociceptive neurons. May regulate nociceptor function and/or development, including the sensation or modulation of pain. This is Mas-related G-protein coupled receptor member B8 (Mrgprb8) from Mus musculus (Mouse).